The primary structure comprises 159 residues: Transcriptional repressor NrdR (159 aa).

A zinc finger lies at 3-34 (CPTCQNTDSRVLESRSADTGKSVRRRRECLNC). The ATP-cone domain maps to 49 to 139 (ISVIKKDGSR…VYRKFNGVKD (91 aa)).

This sequence belongs to the NrdR family. It depends on Zn(2+) as a cofactor.

Its function is as follows. Negatively regulates transcription of bacterial ribonucleotide reductase nrd genes and operons by binding to NrdR-boxes. The sequence is that of Transcriptional repressor NrdR from Prochlorococcus marinus subsp. pastoris (strain CCMP1986 / NIES-2087 / MED4).